Here is a 614-residue protein sequence, read N- to C-terminus: ATP-dependent rRNA helicase SPB4 (614 aa).

A Q motif motif is present at residues Trp10–Ala38. The 193-residue stretch at Ile41–Ile233 folds into the Helicase ATP-binding domain. Ala54–Thr61 is a binding site for ATP. The short motif at Asp181–Asp184 is the DEAD box element. The 172-residue stretch at Lys260–Met431 folds into the Helicase C-terminal domain. Residues Glu510–Ser581 are a coiled coil. Residues Lys514–Ala529 are compositionally biased toward basic and acidic residues. Residues Lys514–Leu614 are disordered. Residues Arg530–Leu541 are compositionally biased toward basic residues. Composition is skewed to basic and acidic residues over residues Lys551–Glu563 and Glu584–Lys595. The span at Ser604–Leu614 shows a compositional bias: polar residues.

Belongs to the DEAD box helicase family. DDX55/SPB4 subfamily. Component of pre-60S ribosomal complexes.

Its subcellular location is the nucleus. The protein localises to the nucleolus. It catalyses the reaction ATP + H2O = ADP + phosphate + H(+). Its function is as follows. ATP-binding RNA helicase involved in the biogenesis of 60S ribosomal subunits. Binds 90S pre-ribosomal particles and dissociates from pre-60S ribosomal particles after processing of 27SB pre-rRNA. Required for the normal formation of 18S rRNA through the processing of pre-rRNAs at sites A0, A1 and A2, and the normal formation of 25S and 5.8S rRNAs through the processing of pre-rRNAs at sites C1 and C2. The polypeptide is ATP-dependent rRNA helicase SPB4 (Debaryomyces hansenii (strain ATCC 36239 / CBS 767 / BCRC 21394 / JCM 1990 / NBRC 0083 / IGC 2968) (Yeast)).